The primary structure comprises 315 residues: Gamma-hemolysin component C (315 aa).

The signal sequence occupies residues 1 to 29; the sequence is MLKNKILTTTLSVSLLAPLANPLLENAKA.

It belongs to the aerolysin family. As to quaternary structure, toxicity requires sequential binding and synergistic association of a class S and a class F component which form heterooligomeric complexes. HlgB (class F) associates with either hlgA thus forming an AB toxin or with hlgC thus forming a CB toxin.

It localises to the secreted. Its function is as follows. Toxin that seems to act by forming pores in the membrane of the cell. Has a hemolytic and a leucotoxic activity. The sequence is that of Gamma-hemolysin component C (hlgC) from Staphylococcus aureus (strain NCTC 8325 / PS 47).